The primary structure comprises 433 residues: Enolase (433 aa).

The disordered stretch occupies residues 37–59 (RAAVPSGASTGEHEAVELRDGDK). Residues 47–59 (GEHEAVELRDGDK) are compositionally biased toward basic and acidic residues. A (2R)-2-phosphoglycerate-binding site is contributed by Gln166. Glu208 acts as the Proton donor in catalysis. The Mg(2+) site is built by Asp245, Glu291, and Asp318. 4 residues coordinate (2R)-2-phosphoglycerate: Lys343, Arg372, Ser373, and Lys394. Residue Lys343 is the Proton acceptor of the active site.

It belongs to the enolase family. Requires Mg(2+) as cofactor.

Its subcellular location is the cytoplasm. The protein resides in the secreted. It localises to the cell surface. The enzyme catalyses (2R)-2-phosphoglycerate = phosphoenolpyruvate + H2O. The protein operates within carbohydrate degradation; glycolysis; pyruvate from D-glyceraldehyde 3-phosphate: step 4/5. Functionally, catalyzes the reversible conversion of 2-phosphoglycerate (2-PG) into phosphoenolpyruvate (PEP). It is essential for the degradation of carbohydrates via glycolysis. In Leptospira biflexa serovar Patoc (strain Patoc 1 / Ames), this protein is Enolase.